Reading from the N-terminus, the 333-residue chain is Glycogenin-1 (333 aa).

Thr-2 carries the post-translational modification N-acetylthreonine. UDP is bound by residues Leu-9, Thr-11, Asn-12, and Tyr-15. The UDP-alpha-D-glucose site is built by Leu-9, Thr-11, Asn-12, and Tyr-15. Ser-44 bears the Phosphoserine mark. Arg-77 is a binding site for UDP. UDP-alpha-D-glucose is bound by residues Arg-77, Lys-86, Asp-102, Ala-103, Asp-104, Asn-133, Ser-134, Asp-160, Asp-163, and Gln-164. The UDP site is built by Asp-102, Ala-103, and Asp-104. Asp-102 contacts Mn(2+). Asp-104 lines the Mn(2+) pocket. A glycan (O-linked (Glc...) tyrosine) is linked at Tyr-195. UDP-binding residues include His-212, Gly-215, and Lys-218. Mn(2+) is bound at residue His-212. UDP-alpha-D-glucose is bound by residues Gly-215 and Lys-218. Positions 284–316 (SDLSFGEAPAAPQPSMSSEERKERWEQGQADYM) are interaction with GYS1. The tract at residues 290–316 (EAPAAPQPSMSSEERKERWEQGQADYM) is disordered.

This sequence belongs to the glycosyltransferase 8 family. Glycogenin subfamily. As to quaternary structure, part of the GYS1-GYG1 complex, a heterooctamer composed of a tetramer of GYS1 and 2 dimers of GYG1, where each GYS1 protomer binds to one GYG1 subunit (via GYG1 C-terminus); the GYS1 tetramer may dissociate from GYG1 dimers to continue glycogen polymerization on its own. May also form a heterooctamer complex with GYS2. It depends on Mn(2+) as a cofactor. In terms of processing, self-glycosylated by the transfer of glucose residues from UDP-glucose to itself, forming an alpha-1,4-glycan of around 10 residues attached to Tyr-195. Post-translationally, phosphorylated. In terms of tissue distribution, skeletal muscle, heart, to a lesser extent in kidney, lung and brain.

It is found in the cytoplasm. It localises to the nucleus. The enzyme catalyses L-tyrosyl-[glycogenin] + UDP-alpha-D-glucose = alpha-D-glucosyl-L-tyrosyl-[glycogenin] + UDP + H(+). It catalyses the reaction [1,4-alpha-D-glucosyl](n)-L-tyrosyl-[glycogenin] + UDP-alpha-D-glucose = [1,4-alpha-D-glucosyl](n+1)-L-tyrosyl-[glycogenin] + UDP + H(+). The protein operates within glycan biosynthesis; glycogen biosynthesis. In terms of biological role, glycogenin participates in the glycogen biosynthetic process along with glycogen synthase and glycogen branching enzyme. It catalyzes the formation of a short alpha (1,4)-glucosyl chain covalently attached via a glucose 1-O-tyrosyl linkage to internal tyrosine residues and these chains act as primers for the elongation reaction catalyzed by glycogen synthase. The sequence is that of Glycogenin-1 from Mus musculus (Mouse).